We begin with the raw amino-acid sequence, 105 residues long: Met repressor (105 aa).

The protein belongs to the MetJ family. As to quaternary structure, homodimer.

It localises to the cytoplasm. Functionally, this regulatory protein, when combined with SAM (S-adenosylmethionine) represses the expression of the methionine regulon and of enzymes involved in SAM synthesis. The chain is Met repressor from Photorhabdus laumondii subsp. laumondii (strain DSM 15139 / CIP 105565 / TT01) (Photorhabdus luminescens subsp. laumondii).